The chain runs to 698 residues: UvrABC system protein B (698 aa).

A Helicase ATP-binding domain is found at 35-210; sequence ARLQAGEKDI…TFRVRGDTVE (176 aa). 48–55 contributes to the ATP binding site; it reads GATGTGKS. A Beta-hairpin motif is present at residues 101–124; that stretch reads YYDYYQPEAYVPSSDTYIEKDSSI. Residues 438–604 form the Helicase C-terminal domain; the sequence is QIDDLLAEIN…PLRKRIGDIT (167 aa). Residues 654-689 enclose the UVR domain; that stretch reads AELIQELTDQMHVAAGELQFEVAARLRDEISDLKKE.

Belongs to the UvrB family. In terms of assembly, forms a heterotetramer with UvrA during the search for lesions. Interacts with UvrC in an incision complex.

The protein localises to the cytoplasm. Functionally, the UvrABC repair system catalyzes the recognition and processing of DNA lesions. A damage recognition complex composed of 2 UvrA and 2 UvrB subunits scans DNA for abnormalities. Upon binding of the UvrA(2)B(2) complex to a putative damaged site, the DNA wraps around one UvrB monomer. DNA wrap is dependent on ATP binding by UvrB and probably causes local melting of the DNA helix, facilitating insertion of UvrB beta-hairpin between the DNA strands. Then UvrB probes one DNA strand for the presence of a lesion. If a lesion is found the UvrA subunits dissociate and the UvrB-DNA preincision complex is formed. This complex is subsequently bound by UvrC and the second UvrB is released. If no lesion is found, the DNA wraps around the other UvrB subunit that will check the other stand for damage. The polypeptide is UvrABC system protein B (Beutenbergia cavernae (strain ATCC BAA-8 / DSM 12333 / CCUG 43141 / JCM 11478 / NBRC 16432 / NCIMB 13614 / HKI 0122)).